A 617-amino-acid chain; its full sequence is RNA polymerase sigma factor RpoD (617 aa).

The interval 192-222 (NITNDSNENEDENEDENEDEDENSIDPELAN) is disordered. The span at 198–216 (NENEDENEDENEDEDENSI) shows a compositional bias: acidic residues. A sigma-70 factor domain-2 region spans residues 383–453 (MVEANLRLVI…TRSIADQART (71 aa)). Residues 407 to 410 (DLIQ) carry the Interaction with polymerase core subunit RpoC motif. The sigma-70 factor domain-3 stretch occupies residues 462 to 538 (ETINKLNRIS…DTTLELPLDS (77 aa)). Residues 551-604 (VLSGLTAREAKVLRMRFGIDMNTDHTLEEVGKQFDVTRERIRQIEAKALRKLRH) form a sigma-70 factor domain-4 region. Residues 577-596 (LEEVGKQFDVTRERIRQIEA) constitute a DNA-binding region (H-T-H motif).

This sequence belongs to the sigma-70 factor family. RpoD/SigA subfamily. In terms of assembly, interacts transiently with the RNA polymerase catalytic core.

The protein localises to the cytoplasm. In terms of biological role, sigma factors are initiation factors that promote the attachment of RNA polymerase to specific initiation sites and are then released. This sigma factor is the primary sigma factor during exponential growth. The polypeptide is RNA polymerase sigma factor RpoD (Buchnera aphidicola subsp. Schizaphis graminum (strain Sg)).